The following is a 603-amino-acid chain: NADH-ubiquinone oxidoreductase chain 5 (603 aa).

The next 16 helical transmembrane spans lie at 4 to 24 (YTTMTTLTLTPLILPILTTLI), 38 to 58 (SIIASTFIISLFPTTMFMCLD), 87 to 107 (MTFIPVALFVTWAIMEFSLWY), 122 to 142 (LIFLITMLILVTANNLFQLFI), 144 to 160 (WEGVGIMSFLLISWWYA), 171 to 191 (AILYNRIGDIGFILALAWFLL), 211 to 233 (TPLLGFLLAAAGKSAQLGLHPWL), 241 to 261 (TPVSALLHSSTMVVAGVFLLI), 272 to 292 (LIQTLTLCLGAITTLFAAICA), 301 to 320 (IVAFSTSSQLGLMMVTIGIN), 325 to 347 (AFLHICTHAFFKAMLFMCSGSII), 370 to 390 (STSLIIGSLALAGMPFLTGFY), 407 to 429 (WALSITLIATSLTSAYSTRMILL), 457 to 477 (LTIGSLFAGFFITNNILPMST), 482 to 502 (IPLYLKLTALSVTFLGLLTAL), and 583 to 603 (MIKLYFLSFLFPLILTLLLIM).

It belongs to the complex I subunit 5 family. Core subunit of respiratory chain NADH dehydrogenase (Complex I) which is composed of 45 different subunits.

Its subcellular location is the mitochondrion inner membrane. It catalyses the reaction a ubiquinone + NADH + 5 H(+)(in) = a ubiquinol + NAD(+) + 4 H(+)(out). Its function is as follows. Core subunit of the mitochondrial membrane respiratory chain NADH dehydrogenase (Complex I) which catalyzes electron transfer from NADH through the respiratory chain, using ubiquinone as an electron acceptor. Essential for the catalytic activity and assembly of complex I. The protein is NADH-ubiquinone oxidoreductase chain 5 (MT-ND5) of Pan paniscus (Pygmy chimpanzee).